The primary structure comprises 332 residues: ATP-dependent 6-phosphofructokinase (332 aa).

ATP is bound at residue G11. 21-25 (RSVVR) contacts ADP. Residues 72-73 (RC) and 102-105 (GDGS) each bind ATP. D103 is a binding site for Mg(2+). 126–128 (TID) lines the substrate pocket. Catalysis depends on D128, which acts as the Proton acceptor. An ADP-binding site is contributed by R155. Residues R163 and 170–172 (MGR) each bind substrate. ADP is bound by residues 186–188 (GAE), R212, and 214–216 (KLH). Residues E223, R256, and 262–265 (HIQR) each bind substrate.

The protein belongs to the phosphofructokinase type A (PFKA) family. ATP-dependent PFK group I subfamily. Prokaryotic clade 'B1' sub-subfamily. Homotetramer. The cofactor is Mg(2+).

It is found in the cytoplasm. It carries out the reaction beta-D-fructose 6-phosphate + ATP = beta-D-fructose 1,6-bisphosphate + ADP + H(+). It participates in carbohydrate degradation; glycolysis; D-glyceraldehyde 3-phosphate and glycerone phosphate from D-glucose: step 3/4. Allosterically activated by ADP and other diphosphonucleosides, and allosterically inhibited by phosphoenolpyruvate. In terms of biological role, catalyzes the phosphorylation of D-fructose 6-phosphate to fructose 1,6-bisphosphate by ATP, the first committing step of glycolysis. The chain is ATP-dependent 6-phosphofructokinase from Halothermothrix orenii (strain H 168 / OCM 544 / DSM 9562).